We begin with the raw amino-acid sequence, 3655 residues long: NuA4 acetyltransferase complex subunit Tra2 (3655 aa).

The interval Ser8 to Lys2459 is HEAT. HEAT repeat units lie at residues Gln46 to Arg89, Gln94 to Phe131, Thr149 to Gln188, Pro230 to Phe268, Leu300 to Thr338, Ser374 to Leu412, Phe438 to Ser475, Ile606 to Ser643, Lys644 to Ser683, Ser735 to Leu772, Pro783 to Asp820, Pro828 to Lys867, Ala1100 to Ser1141, Asp1147 to Arg1184, Glu1193 to Thr1230, Arg1429 to Leu1470, Asn1665 to Lys1704, Gly1709 to Ala1746, Ile1753 to Val1790, Gln1808 to Ser1846, Glu1891 to Leu1934, Ser1973 to Asn2011, Glu2036 to Thr2073, Asp2120 to Val2157, Asp2183 to Val2221, and Asp2401 to Pro2438. The interval Thr2460–Leu3655 is head. The region spanning Leu2484–Asp3045 is the FAT domain. The interval Arg3059–Lys3105 is disordered. The span at Arg3063–Asp3077 shows a compositional bias: basic and acidic residues. Positions Leu3078–Ser3092 are enriched in low complexity. Positions Val3285–Leu3625 constitute a PI3K/PI4K catalytic domain. The segment at Val3291 to Cys3297 is G-loop. Positions Asn3491–Lys3499 are catalytic loop. The interval Ser3511–Thr3536 is activation loop. The region spanning Glu3623–Leu3655 is the FATC domain.

Belongs to the PI3/PI4-kinase family. TRA1 subfamily. In terms of assembly, component of the NuA4 acetyltransferase complex. Tra1 is the scaffold subunit for binding to a variety of transcription activators or transcription factors to recruit NuA4 for targeted gene activation. Requires Hsp90 and its co-chaperone, the Triple-T complex (TTT), for its incorporation into NuA4. Interacts with tel2.

Functionally, component of the NuA4 histone H4/H2A acetyltransferase involved in transcription and DNA repair. This Schizosaccharomyces pombe (strain 972 / ATCC 24843) (Fission yeast) protein is NuA4 acetyltransferase complex subunit Tra2.